We begin with the raw amino-acid sequence, 151 residues long: Deoxyuridine 5'-triphosphate nucleotidohydrolase (151 aa).

Substrate is bound by residues 70 to 72 (RSG), Asn-83, 87 to 89 (LID), and Met-97.

This sequence belongs to the dUTPase family. Mg(2+) serves as cofactor.

It catalyses the reaction dUTP + H2O = dUMP + diphosphate + H(+). It functions in the pathway pyrimidine metabolism; dUMP biosynthesis; dUMP from dCTP (dUTP route): step 2/2. Functionally, this enzyme is involved in nucleotide metabolism: it produces dUMP, the immediate precursor of thymidine nucleotides and it decreases the intracellular concentration of dUTP so that uracil cannot be incorporated into DNA. This chain is Deoxyuridine 5'-triphosphate nucleotidohydrolase, found in Pasteurella multocida (strain Pm70).